Here is a 155-residue protein sequence, read N- to C-terminus: SsrA-binding protein (155 aa).

The protein belongs to the SmpB family.

The protein resides in the cytoplasm. Functionally, required for rescue of stalled ribosomes mediated by trans-translation. Binds to transfer-messenger RNA (tmRNA), required for stable association of tmRNA with ribosomes. tmRNA and SmpB together mimic tRNA shape, replacing the anticodon stem-loop with SmpB. tmRNA is encoded by the ssrA gene; the 2 termini fold to resemble tRNA(Ala) and it encodes a 'tag peptide', a short internal open reading frame. During trans-translation Ala-aminoacylated tmRNA acts like a tRNA, entering the A-site of stalled ribosomes, displacing the stalled mRNA. The ribosome then switches to translate the ORF on the tmRNA; the nascent peptide is terminated with the 'tag peptide' encoded by the tmRNA and targeted for degradation. The ribosome is freed to recommence translation, which seems to be the essential function of trans-translation. The sequence is that of SsrA-binding protein from Streptococcus pneumoniae (strain 70585).